Here is a 296-residue protein sequence, read N- to C-terminus: Formamidopyrimidine-DNA glycosylase (296 aa).

Proline 2 acts as the Schiff-base intermediate with DNA in catalysis. The active-site Proton donor is the glutamate 3. Lysine 61 (proton donor; for beta-elimination activity) is an active-site residue. DNA is bound by residues histidine 104, arginine 128, and lysine 174. An FPG-type zinc finger spans residues 260–294 (HAYGQQGQACDRCGSNIIREKFANRSSHFCPRCQL). The Proton donor; for delta-elimination activity role is filled by arginine 284.

Belongs to the FPG family. In terms of assembly, monomer. Zn(2+) is required as a cofactor.

The enzyme catalyses Hydrolysis of DNA containing ring-opened 7-methylguanine residues, releasing 2,6-diamino-4-hydroxy-5-(N-methyl)formamidopyrimidine.. It catalyses the reaction 2'-deoxyribonucleotide-(2'-deoxyribose 5'-phosphate)-2'-deoxyribonucleotide-DNA = a 3'-end 2'-deoxyribonucleotide-(2,3-dehydro-2,3-deoxyribose 5'-phosphate)-DNA + a 5'-end 5'-phospho-2'-deoxyribonucleoside-DNA + H(+). Functionally, involved in base excision repair of DNA damaged by oxidation or by mutagenic agents. Acts as a DNA glycosylase that recognizes and removes damaged bases. Has a preference for oxidized purines, such as 7,8-dihydro-8-oxoguanine (8-oxoG). Has AP (apurinic/apyrimidinic) lyase activity and introduces nicks in the DNA strand. Cleaves the DNA backbone by beta-delta elimination to generate a single-strand break at the site of the removed base with both 3'- and 5'-phosphates. In Corynebacterium diphtheriae (strain ATCC 700971 / NCTC 13129 / Biotype gravis), this protein is Formamidopyrimidine-DNA glycosylase.